Here is a 254-residue protein sequence, read N- to C-terminus: Bowman-Birk type bran trypsin inhibitor (254 aa).

The signal sequence occupies residues methionine 1–alanine 22. A propeptide spanning residues histidine 23–serine 118 is cleaved from the precursor. 3 repeats span residues lysine 46–glutamate 120, arginine 121–proline 187, and arginine 188–arginine 251. Cystine bridges form between cysteine 51–cysteine 248, cysteine 125–cysteine 185, cysteine 126–cysteine 143, cysteine 152–cysteine 159, cysteine 156–cysteine 172, cysteine 193–cysteine 248, cysteine 194–cysteine 209, cysteine 199–cysteine 207, cysteine 216–cysteine 223, and cysteine 220–cysteine 236. A propeptide spanning residues alanine 252–asparagine 254 is cleaved from the precursor.

The protein belongs to the Bowman-Birk serine protease inhibitor family. As to expression, expressed in roots, leaves and flowers.

In Oryza sativa subsp. indica (Rice), this protein is Bowman-Birk type bran trypsin inhibitor (RBBI3.3).